Reading from the N-terminus, the 381-residue chain is 1-deoxy-D-xylulose 5-phosphate reductoisomerase (381 aa).

The NADPH site is built by Thr10, Gly11, Ser12, Ile13, Gly36, Lys37, Asn38, and Asn122. Residue Lys123 participates in 1-deoxy-D-xylulose 5-phosphate binding. NADPH is bound at residue Glu124. Asp148 contacts Mn(2+). Residues Ser149, Glu150, Ser173, and His196 each contribute to the 1-deoxy-D-xylulose 5-phosphate site. Glu150 contributes to the Mn(2+) binding site. Gly202 provides a ligand contact to NADPH. Positions 209, 214, 215, and 218 each coordinate 1-deoxy-D-xylulose 5-phosphate. Glu218 contributes to the Mn(2+) binding site.

Belongs to the DXR family. Mg(2+) serves as cofactor. It depends on Mn(2+) as a cofactor.

It catalyses the reaction 2-C-methyl-D-erythritol 4-phosphate + NADP(+) = 1-deoxy-D-xylulose 5-phosphate + NADPH + H(+). The protein operates within isoprenoid biosynthesis; isopentenyl diphosphate biosynthesis via DXP pathway; isopentenyl diphosphate from 1-deoxy-D-xylulose 5-phosphate: step 1/6. In terms of biological role, catalyzes the NADPH-dependent rearrangement and reduction of 1-deoxy-D-xylulose-5-phosphate (DXP) to 2-C-methyl-D-erythritol 4-phosphate (MEP). In Desulfitobacterium hafniense (strain Y51), this protein is 1-deoxy-D-xylulose 5-phosphate reductoisomerase.